A 319-amino-acid chain; its full sequence is Tetrahydromethanopterin S-methyltransferase subunit H (319 aa).

Belongs to the MtrH family. In terms of assembly, the complex is composed of 8 subunits; MtrA, MtrB, MtrC, MtrD, MtrE, MtrF, MtrG and MtrH.

It catalyses the reaction 5-methyl-5,6,7,8-tetrahydromethanopterin + coenzyme M + 2 Na(+)(in) = 5,6,7,8-tetrahydromethanopterin + methyl-coenzyme M + 2 Na(+)(out). The protein operates within one-carbon metabolism; methanogenesis from CO(2); methyl-coenzyme M from 5,10-methylene-5,6,7,8-tetrahydromethanopterin: step 2/2. In terms of biological role, part of a complex that catalyzes the formation of methyl-coenzyme M and tetrahydromethanopterin from coenzyme M and methyl-tetrahydromethanopterin. This is an energy-conserving, sodium-ion translocating step. MtrH catalyzes the transfer of the methyl group from methyl-tetrahydromethanopterin to the corrinoid prosthetic group of MtrA. This Methanococcus aeolicus (strain ATCC BAA-1280 / DSM 17508 / OCM 812 / Nankai-3) protein is Tetrahydromethanopterin S-methyltransferase subunit H.